Reading from the N-terminus, the 83-residue chain is Translation initiation factor IF-1 (83 aa).

In terms of domain architecture, S1-like spans 1 to 72; sequence MAKEESIEMQ…TRGRIVYREA (72 aa).

The protein belongs to the IF-1 family. As to quaternary structure, component of the 30S ribosomal translation pre-initiation complex which assembles on the 30S ribosome in the order IF-2 and IF-3, IF-1 and N-formylmethionyl-tRNA(fMet); mRNA recruitment can occur at any time during PIC assembly.

Its subcellular location is the cytoplasm. Its function is as follows. One of the essential components for the initiation of protein synthesis. Stabilizes the binding of IF-2 and IF-3 on the 30S subunit to which N-formylmethionyl-tRNA(fMet) subsequently binds. Helps modulate mRNA selection, yielding the 30S pre-initiation complex (PIC). Upon addition of the 50S ribosomal subunit IF-1, IF-2 and IF-3 are released leaving the mature 70S translation initiation complex. The sequence is that of Translation initiation factor IF-1 from Coxiella burnetii (strain Dugway 5J108-111).